The chain runs to 218 residues: 3,4-dihydroxy-2-butanone 4-phosphate synthase (218 aa).

D-ribulose 5-phosphate-binding positions include 38 to 39 (RE), D43, 151 to 155 (RRGHT), and E175. Mg(2+) is bound at residue E39. Residues 125-151 (PHAKPEDLARPGHVFPLRARPGGVMTR) are disordered. Residue H154 coordinates Mg(2+).

Belongs to the DHBP synthase family. As to quaternary structure, homodimer. Requires Mg(2+) as cofactor. It depends on Mn(2+) as a cofactor.

The catalysed reaction is D-ribulose 5-phosphate = (2S)-2-hydroxy-3-oxobutyl phosphate + formate + H(+). Its pathway is cofactor biosynthesis; riboflavin biosynthesis; 2-hydroxy-3-oxobutyl phosphate from D-ribulose 5-phosphate: step 1/1. Its function is as follows. Catalyzes the conversion of D-ribulose 5-phosphate to formate and 3,4-dihydroxy-2-butanone 4-phosphate. The protein is 3,4-dihydroxy-2-butanone 4-phosphate synthase of Vibrio parahaemolyticus serotype O3:K6 (strain RIMD 2210633).